A 298-amino-acid chain; its full sequence is Elongation factor Ts (298 aa).

Residues 79 to 82 form an involved in Mg(2+) ion dislocation from EF-Tu region; it reads TDFV.

This sequence belongs to the EF-Ts family.

The protein resides in the cytoplasm. In terms of biological role, associates with the EF-Tu.GDP complex and induces the exchange of GDP to GTP. It remains bound to the aminoacyl-tRNA.EF-Tu.GTP complex up to the GTP hydrolysis stage on the ribosome. The sequence is that of Elongation factor Ts (tsf) from Mycoplasma genitalium (strain ATCC 33530 / DSM 19775 / NCTC 10195 / G37) (Mycoplasmoides genitalium).